The sequence spans 930 residues: Translation initiation factor IF-2 (930 aa).

Residues 50–67 show a composition bias toward low complexity; sequence FKPAAAPKVEAKPAAPKV. 2 disordered regions span residues 50-195 and 260-346; these read FKPA…PRID and EVVP…HELP. Basic and acidic residues-rich tracts occupy residues 68-90 and 110-125; these read SAEK…EAKP and FKAE…AERR. A compositionally biased stretch (low complexity) spans 129–141; the sequence is KGNNRDQQQNGNR. 2 stretches are compositionally biased toward basic and acidic residues: residues 157-167 and 262-295; these read RDNRRFNDQAK and VPEK…DGPR. Residues 309-318 show a composition bias toward low complexity; that stretch reads NQKNSNWNNN. The span at 337 to 346 shows a compositional bias: basic and acidic residues; sequence VTERKFHELP. Positions 432-599 constitute a tr-type G domain; the sequence is ERPPVVTIMG…TVLLVAEIQE (168 aa). The segment at 441-448 is G1; it reads GHVDHGKT. 441-448 is a binding site for GTP; sequence GHVDHGKT. Residues 466–470 form a G2 region; it reads GITQH. The tract at residues 487–490 is G3; the sequence is DTPG. GTP is bound by residues 487–491 and 541–544; these read DTPGH and NKID. The segment at 541-544 is G4; it reads NKID. The segment at 577 to 579 is G5; it reads SAK.

It belongs to the TRAFAC class translation factor GTPase superfamily. Classic translation factor GTPase family. IF-2 subfamily.

The protein resides in the cytoplasm. In terms of biological role, one of the essential components for the initiation of protein synthesis. Protects formylmethionyl-tRNA from spontaneous hydrolysis and promotes its binding to the 30S ribosomal subunits. Also involved in the hydrolysis of GTP during the formation of the 70S ribosomal complex. The chain is Translation initiation factor IF-2 from Streptococcus pneumoniae (strain Hungary19A-6).